The chain runs to 860 residues: Leucine--tRNA ligase (860 aa).

The 'HIGH' region motif lies at 42-52; it reads PYPSGRLHMGH. Residues 619-623 carry the 'KMSKS' region motif; sequence KMSKS. An ATP-binding site is contributed by K622.

It belongs to the class-I aminoacyl-tRNA synthetase family.

It is found in the cytoplasm. It catalyses the reaction tRNA(Leu) + L-leucine + ATP = L-leucyl-tRNA(Leu) + AMP + diphosphate. The chain is Leucine--tRNA ligase from Yersinia enterocolitica serotype O:8 / biotype 1B (strain NCTC 13174 / 8081).